We begin with the raw amino-acid sequence, 162 residues long: Peptide deformylase-like (162 aa).

This sequence belongs to the polypeptide deformylase family.

This Staphylococcus aureus (strain MRSA252) protein is Peptide deformylase-like.